A 227-amino-acid polypeptide reads, in one-letter code: MELVFIRHGFSEWNAKNLFTGWRDVNLTERGIEEAKAAGKKLLDAGYEFDIAFTSVLTRAIKTCNIVLEESNQLWIPQVKNWRLNERHYGALQGLDKKATAEQYGDEQVHIWRRSYDISPPDLDPQDPNSAHNDRRYAHLPKDVVPNAENLKITLERVLPFWEDQIAPALLSGKRVLVTAHGNSLRALAKHIIGISDEEIMDFEIPTGQPLVLKLDDKLNFVEKFYL.

Substrate is bound by residues 7–14 (RHGFSEWN), 20–21 (TG), Arg-59, 86–89 (ERHY), Lys-97, 113–114 (RR), and 182–183 (GN). His-8 acts as the Tele-phosphohistidine intermediate in catalysis. Glu-86 serves as the catalytic Proton donor/acceptor.

It belongs to the phosphoglycerate mutase family. BPG-dependent PGAM subfamily. Homodimer.

It catalyses the reaction (2R)-2-phosphoglycerate = (2R)-3-phosphoglycerate. Its pathway is carbohydrate degradation; glycolysis; pyruvate from D-glyceraldehyde 3-phosphate: step 3/5. Functionally, catalyzes the interconversion of 2-phosphoglycerate and 3-phosphoglycerate. This Glaesserella parasuis serovar 5 (strain SH0165) (Haemophilus parasuis) protein is 2,3-bisphosphoglycerate-dependent phosphoglycerate mutase.